The chain runs to 194 residues: Large ribosomal subunit protein bL9 (194 aa).

It belongs to the bacterial ribosomal protein bL9 family.

Functionally, binds to the 23S rRNA. This Paracoccus denitrificans (strain Pd 1222) protein is Large ribosomal subunit protein bL9.